Consider the following 242-residue polypeptide: 4-hydroxy-tetrahydrodipicolinate reductase (242 aa).

NAD(+) contacts are provided by residues 8 to 13, 75 to 77, and 99 to 102; these read GAKGRM, GTT, and ATNM. His-131 serves as the catalytic Proton donor/acceptor. Residue His-132 coordinates (S)-2,3,4,5-tetrahydrodipicolinate. The Proton donor role is filled by Lys-135. 141-142 is a (S)-2,3,4,5-tetrahydrodipicolinate binding site; it reads GT.

This sequence belongs to the DapB family.

It is found in the cytoplasm. The enzyme catalyses (S)-2,3,4,5-tetrahydrodipicolinate + NAD(+) + H2O = (2S,4S)-4-hydroxy-2,3,4,5-tetrahydrodipicolinate + NADH + H(+). It carries out the reaction (S)-2,3,4,5-tetrahydrodipicolinate + NADP(+) + H2O = (2S,4S)-4-hydroxy-2,3,4,5-tetrahydrodipicolinate + NADPH + H(+). Its pathway is amino-acid biosynthesis; L-lysine biosynthesis via DAP pathway; (S)-tetrahydrodipicolinate from L-aspartate: step 4/4. Functionally, catalyzes the conversion of 4-hydroxy-tetrahydrodipicolinate (HTPA) to tetrahydrodipicolinate. This is 4-hydroxy-tetrahydrodipicolinate reductase from Campylobacter jejuni subsp. jejuni serotype O:6 (strain 81116 / NCTC 11828).